A 101-amino-acid chain; its full sequence is Feather keratin Cos2-3 (101 aa).

Ser-2 carries the N-acetylserine modification.

Belongs to the avian keratin family. As to quaternary structure, the avian keratins (F-ker, S-ker, C-ker and B-ker) are a complex mixture of very similar polypeptides.

This Columba livia (Rock dove) protein is Feather keratin Cos2-3.